We begin with the raw amino-acid sequence, 32 residues long: Dermatoxin-J2 (32 aa).

The residue at position 32 (Gln32) is a Glutamine amide.

In terms of tissue distribution, expressed by the skin glands.

The protein localises to the secreted. Antimicrobial peptide. The chain is Dermatoxin-J2 from Phasmahyla jandaia (Jandaia leaf frog).